A 508-amino-acid chain; its full sequence is DNA polymerase II small subunit (508 aa).

Residues 66–80 (ASSAAQTSAPASTPP) are compositionally biased toward low complexity. The interval 66–122 (ASSAAQTSAPASTPPDEATTHTDPSATDTPPNHDGGRAATADARSVEIDGDMTGAST) is disordered. Polar residues predominate over residues 86-95 (HTDPSATDTP).

The protein belongs to the DNA polymerase delta/II small subunit family. Heterodimer of a large subunit and a small subunit.

It carries out the reaction DNA(n) + a 2'-deoxyribonucleoside 5'-triphosphate = DNA(n+1) + diphosphate. The catalysed reaction is Exonucleolytic cleavage in the 3'- to 5'-direction to yield nucleoside 5'-phosphates.. In terms of biological role, possesses two activities: a DNA synthesis (polymerase) and an exonucleolytic activity that degrades single-stranded DNA in the 3' to 5' direction. Has a template-primer preference which is characteristic of a replicative DNA polymerase. In Halobacterium salinarum (strain ATCC 29341 / DSM 671 / R1), this protein is DNA polymerase II small subunit.